A 100-amino-acid polypeptide reads, in one-letter code: Replication restart protein PriB (100 aa).

The SSB domain maps to 1-99 (MGFNNLVSLA…LRIQNIKEYK (99 aa)).

Belongs to the PriB family. In terms of assembly, homodimer. Interacts with PriA and DnaT. Component of the replication restart primosome. Primosome assembly occurs via a 'hand-off' mechanism. PriA binds to replication forks, subsequently PriB then DnaT bind; DnaT then displaces ssDNA to generate the helicase loading substrate.

Its function is as follows. Involved in the restart of stalled replication forks, which reloads the replicative helicase on sites other than the origin of replication; the PriA-PriB pathway is the major replication restart pathway. During primosome assembly it facilitates complex formation between PriA and DnaT on DNA; stabilizes PriA on DNA. Stimulates the DNA unwinding activity of PriA helicase. In Neisseria meningitidis serogroup C (strain 053442), this protein is Replication restart protein PriB.